The chain runs to 66 residues: Large ribosomal subunit protein uL29 (66 aa).

This sequence belongs to the universal ribosomal protein uL29 family.

This chain is Large ribosomal subunit protein uL29, found in Borreliella afzelii (strain PKo) (Borrelia afzelii).